Reading from the N-terminus, the 1147-residue chain is ATP-dependent helicase/deoxyribonuclease subunit B (1147 aa).

8-15 is a binding site for ATP; that stretch reads GRAGSGKS. [4Fe-4S] cluster contacts are provided by Cys-786, Cys-1106, Cys-1109, and Cys-1115.

It belongs to the helicase family. AddB/RexB type 1 subfamily. In terms of assembly, heterodimer of AddA and AddB. Requires Mg(2+) as cofactor. The cofactor is [4Fe-4S] cluster.

In terms of biological role, the heterodimer acts as both an ATP-dependent DNA helicase and an ATP-dependent, dual-direction single-stranded exonuclease. Recognizes the chi site generating a DNA molecule suitable for the initiation of homologous recombination. The AddB subunit has 5' -&gt; 3' nuclease activity but not helicase activity. The sequence is that of ATP-dependent helicase/deoxyribonuclease subunit B from Clostridium botulinum (strain Loch Maree / Type A3).